A 515-amino-acid polypeptide reads, in one-letter code: Bifunctional pantoate ligase/cytidylate kinase (515 aa).

The interval 1–279 (MKVVETVARL…VGSTRLIDNV (279 aa)) is pantoate--beta-alanine ligase. ATP is bound at residue 31-38 (MGALHEGH). H38 serves as the catalytic Proton donor. Q62 provides a ligand contact to (R)-pantoate. A beta-alanine-binding site is contributed by Q62. ATP is bound at residue 149 to 152 (GQKD). Q155 serves as a coordination point for (R)-pantoate. ATP contacts are provided by residues V178 and 186-189 (LSSR). The tract at residues 280-515 (VLGQHHERRP…LYRDKVGGSV (236 aa)) is cytidylate kinase.

The protein in the N-terminal section; belongs to the pantothenate synthetase family. It in the C-terminal section; belongs to the cytidylate kinase family. Type 1 subfamily.

The protein localises to the cytoplasm. It carries out the reaction (R)-pantoate + beta-alanine + ATP = (R)-pantothenate + AMP + diphosphate + H(+). It catalyses the reaction CMP + ATP = CDP + ADP. The catalysed reaction is dCMP + ATP = dCDP + ADP. It participates in cofactor biosynthesis; (R)-pantothenate biosynthesis; (R)-pantothenate from (R)-pantoate and beta-alanine: step 1/1. In terms of biological role, catalyzes the condensation of pantoate with beta-alanine in an ATP-dependent reaction via a pantoyl-adenylate intermediate. Functionally, catalyzes the transfer of a phosphate group from ATP to either CMP or dCMP to form CDP or dCDP and ADP, respectively. In Gloeobacter violaceus (strain ATCC 29082 / PCC 7421), this protein is Bifunctional pantoate ligase/cytidylate kinase.